Reading from the N-terminus, the 409-residue chain is Lactadherin (409 aa).

2 consecutive EGF-like domains span residues 2–41 (SGDFCDSSLCLNGGTCLLDQDPQKPFHCLCPEGFTGLICN) and 44–88 (EKGP…IHCE). 3 cysteine pairs are disulfide-bonded: cysteine 6–cysteine 17, cysteine 11–cysteine 29, and cysteine 31–cysteine 40. Residue asparagine 41 is glycosylated (N-linked (GlcNAc...) asparagine). Cystine bridges form between cysteine 48–cysteine 59, cysteine 53–cysteine 76, cysteine 78–cysteine 87, cysteine 91–cysteine 247, cysteine 234–cysteine 238, and cysteine 252–cysteine 409. Residues 67-69 (RGD) carry the Cell attachment site motif. F5/8 type C domains are found at residues 91–247 (CNAP…LLGC) and 252–409 (CAEP…LLGC). Asparagine 372 is a glycosylation site (N-linked (GlcNAc...) asparagine).

As to expression, mammary epithelial cell surfaces and spermatozoan. Also present in testis, epididymis, uterus, adrenal gland, tonsil, muscle, heart, lymphatic gland, thymus and kidney but not spleen, liver, lung or brain.

The protein localises to the membrane. Its subcellular location is the secreted. It is found in the cytoplasmic vesicle. The protein resides in the secretory vesicle. It localises to the acrosome membrane. In terms of biological role, contributes to phagocytic removal of apoptotic cells in many tissues. Plays an important role in the maintenance of intestinal epithelial homeostasis and the promotion of mucosal healing. Promotes VEGF-dependent neovascularization. Specific ligand for the alpha-v/beta-3 and alpha-v/beta-5 receptors. Also binds to phosphatidylserine-enriched cell surfaces in a receptor-independent manner. Zona pellucida-binding protein which may play a role in gamete interaction. This Sus scrofa (Pig) protein is Lactadherin (MFGE8).